A 599-amino-acid chain; its full sequence is Elongation factor 4 (599 aa).

Residues 2–184 (KHIRNFSIIA…RLVRDIPPPQ (183 aa)) form the tr-type G domain. GTP contacts are provided by residues 14–19 (DHGKST) and 131–134 (NKID).

This sequence belongs to the TRAFAC class translation factor GTPase superfamily. Classic translation factor GTPase family. LepA subfamily.

Its subcellular location is the cell inner membrane. The catalysed reaction is GTP + H2O = GDP + phosphate + H(+). In terms of biological role, required for accurate and efficient protein synthesis under certain stress conditions. May act as a fidelity factor of the translation reaction, by catalyzing a one-codon backward translocation of tRNAs on improperly translocated ribosomes. Back-translocation proceeds from a post-translocation (POST) complex to a pre-translocation (PRE) complex, thus giving elongation factor G a second chance to translocate the tRNAs correctly. Binds to ribosomes in a GTP-dependent manner. This is Elongation factor 4 from Yersinia enterocolitica serotype O:8 / biotype 1B (strain NCTC 13174 / 8081).